Reading from the N-terminus, the 187-residue chain is Flavin-dependent monooxygenase, reductase subunit HsaB (187 aa).

FAD-binding positions include 32–36 (PVGFA), 38–39 (QS), 53–55 (CPT), 59–60 (RS), and 85–86 (RF). 152-155 (FYRG) is an NAD(+) binding site.

It belongs to the non-flavoprotein flavin reductase family. HsaAB monooxygenase consists of an oxygenase component HsaA and a reductase component HsaB.

The enzyme catalyses a reduced flavin + NAD(+) = an oxidized flavin + NADH + 2 H(+). It functions in the pathway lipid metabolism; steroid biosynthesis. Its function is as follows. Catalyzes the reduction of free flavins (FMN or FAD) by NADH. Subsequently, the reduced flavins diffuse to the HsaA oxygenase subunit. This is Flavin-dependent monooxygenase, reductase subunit HsaB (hsaB) from Mycobacterium tuberculosis (strain CDC 1551 / Oshkosh).